The chain runs to 195 residues: uncharacterized protein (195 aa).

The HTH tetR-type domain maps to 6–66 (VESRKRLLKA…ELITDFHSRV (61 aa)). The H-T-H motif DNA-binding region spans 29–48 (KVSEIVKKAGFTQPSFYLYF).

This is an uncharacterized protein from Bacillus subtilis (strain 168).